Reading from the N-terminus, the 566-residue chain is Mucolipin-2 (566 aa).

The Cytoplasmic portion of the chain corresponds to 1 to 65; sequence MARQPYRFPQ…YRARRQIPWK (65 aa). Residues 66-86 traverse the membrane as a helical segment; that stretch reads LGLQILKIVMVTTQLVRFGLS. The Extracellular segment spans residues 87 to 288; sequence NQLVVAFKED…IFGSTQKNAQ (202 aa). Positions 107–123 are extracellular/lumenal pore loop; sequence KGYSGTDEDDYSCSVYT. 2 disulfide bridges follow: C164–C190 and C243–C274. Residues 289 to 309 form a helical membrane-spanning segment; sequence YVLVFDAFVIVICLASLILCT. Topologically, residues 310–346 are cytoplasmic; it reads RSIVLALRLRKRFLNFFLEKYKRPVCDTDQWEFINGW. A helical transmembrane segment spans residues 347–367; it reads YVLVIISDLMTIIGSILKMEI. The Extracellular segment spans residues 368–376; the sequence is KAKNLTNYD. Residues 377–397 form a helical membrane-spanning segment; it reads LCSIFLGTSTLLVWVGVIRYL. The Cytoplasmic segment spans residues 398–419; it reads GYFQAYNVLILTMQASLPKVLR. A helical membrane pass occupies residues 420–440; sequence FCACAGMIYLGYTFCGWIVLG. The Extracellular segment spans residues 441 to 448; that stretch reads PYHDKFEN. Residues 449–469 constitute an intramembrane region (pore-forming); sequence LNTVAECLFSLVNGDDMFATF. The Selectivity filter motif lies at 461-464; sequence NGDD. Residues 470–480 lie on the Extracellular side of the membrane; that stretch reads AQIQQKSILVW. The helical transmembrane segment at 481–502 threads the bilayer; that stretch reads LFSRLYLYSFISLFIYMILSLF. Residues 503–566 lie on the Cytoplasmic side of the membrane; the sequence is IALITDSYDT…RSDDHLIPIS (64 aa).

The protein belongs to the transient receptor (TC 1.A.4) family. Polycystin subfamily. MCOLN2 sub-subfamily. In terms of assembly, forms homooligomeric complexes; probably tetrameric. Can heterooligomerize with MCOLN1; heteromeric assemblies have different channel properties as compared to the respective homooligomers and may be tissue-specific. Interacts with TMEM176A.

It is found in the cell membrane. The protein resides in the late endosome membrane. It localises to the lysosome membrane. The protein localises to the recycling endosome membrane. It carries out the reaction Ca(2+)(in) = Ca(2+)(out). The catalysed reaction is Fe(2+)(in) = Fe(2+)(out). Its activity is regulated as follows. Channel activity is reduced by low extracellular/lumenal pH level. Nonselective cation channel probably playing a role in the regulation of membrane trafficking events. Acts as a Ca(2+)-permeable cation channel with inwardly rectifying activity. May activate ARF6 and be involved in the trafficking of GPI-anchored cargo proteins to the cell surface via the ARF6-regulated recycling pathway. May play a role in immune processes. In adaptive immunity, TRPML2 and TRPML1 may play redundant roles in the function of the specialized lysosomes of B cells. In the innate immune response, may play a role in the regulation of chemokine secretion and macrophage migration. Through a possible and probably tissue-specific heteromerization with MCOLN1 may be at least in part involved in many lysosome-dependent cellular events. Also functions as a Fe(2+) permeable channel. The polypeptide is Mucolipin-2 (Homo sapiens (Human)).